Reading from the N-terminus, the 142-residue chain is Large ribosomal subunit protein uL11 (142 aa).

This sequence belongs to the universal ribosomal protein uL11 family. In terms of assembly, part of the ribosomal stalk of the 50S ribosomal subunit. Interacts with L10 and the large rRNA to form the base of the stalk. L10 forms an elongated spine to which L12 dimers bind in a sequential fashion forming a multimeric L10(L12)X complex. One or more lysine residues are methylated.

Forms part of the ribosomal stalk which helps the ribosome interact with GTP-bound translation factors. This chain is Large ribosomal subunit protein uL11, found in Nitrobacter hamburgensis (strain DSM 10229 / NCIMB 13809 / X14).